The sequence spans 247 residues: Cementoblastoma-derived protein 1 (247 aa).

Over residues 1–28 the composition is skewed to polar residues; it reads MGTSSTDSQQAGHRRCSTSNTSAENLTC. Disordered regions lie at residues 1-52 and 147-183; these read MGTS…AGQP and EENS…EKVK.

Phosphorylated. In terms of processing, N-glycosylated. Expressed by cementoblasts, a subpopulation of periodontal ligament cells and cells located around vessels in periodontium (at protein level).

The protein resides in the cytoplasm. Its subcellular location is the nucleus. In terms of biological role, may play a role in development of the periodontium which surrounds and supports the teeth by promoting the differentiation of multi-potent cells from the periodontal ligament into cementoblasts to form the cementum. Binds hydroxyapatite and may promote the biomineralization of the cementum. Also promotes cell proliferation. The sequence is that of Cementoblastoma-derived protein 1 from Homo sapiens (Human).